The primary structure comprises 356 residues: NADH-quinone oxidoreductase subunit H (356 aa).

9 consecutive transmembrane segments (helical) span residues 22–42 (GVVS…TAYL), 59–79 (PSLA…KLVF), 93–113 (FIIA…VIPI), 124–144 (IGGI…IIIA), 171–191 (MALS…IQIV), 198–218 (PIWL…SILA), 240–260 (VEYS…NMIL), 285–305 (IPGY…FLWI), and 321–341 (GLKV…TILV).

This sequence belongs to the complex I subunit 1 family. In terms of assembly, NDH-1 is composed of 14 different subunits. Subunits NuoA, H, J, K, L, M, N constitute the membrane sector of the complex.

It localises to the cell inner membrane. It carries out the reaction a quinone + NADH + 5 H(+)(in) = a quinol + NAD(+) + 4 H(+)(out). NDH-1 shuttles electrons from NADH, via FMN and iron-sulfur (Fe-S) centers, to quinones in the respiratory chain. The immediate electron acceptor for the enzyme in this species is believed to be ubiquinone. Couples the redox reaction to proton translocation (for every two electrons transferred, four hydrogen ions are translocated across the cytoplasmic membrane), and thus conserves the redox energy in a proton gradient. This subunit may bind ubiquinone. The polypeptide is NADH-quinone oxidoreductase subunit H (Orientia tsutsugamushi (strain Boryong) (Rickettsia tsutsugamushi)).